The chain runs to 520 residues: NAD(P)H-quinone oxidoreductase subunit 2 (520 aa).

Helical transmembrane passes span 15–35, 42–62, 79–99, 106–126, 132–152, 167–187, 210–230, 244–264, 280–300, 306–326, 334–354, 378–398, 400–420, and 466–486; these read ILPE…DLIL, WIGY…YFQW, LSII…LMSI, GTAL…GMFV, LVMI…LTGY, LLIG…LYGL, LGAV…ISAA, PTPV…ALAI, FVFT…ALAQ, MLAY…IAGT, IFYL…IILF, LGLS…GFFG, IYLF…LGLV, and VGLV…NPLF.

This sequence belongs to the complex I subunit 2 family. In terms of assembly, NDH-1 can be composed of about 15 different subunits; different subcomplexes with different compositions have been identified which probably have different functions.

It localises to the cellular thylakoid membrane. It carries out the reaction a plastoquinone + NADH + (n+1) H(+)(in) = a plastoquinol + NAD(+) + n H(+)(out). The catalysed reaction is a plastoquinone + NADPH + (n+1) H(+)(in) = a plastoquinol + NADP(+) + n H(+)(out). Its function is as follows. NDH-1 shuttles electrons from an unknown electron donor, via FMN and iron-sulfur (Fe-S) centers, to quinones in the respiratory and/or the photosynthetic chain. The immediate electron acceptor for the enzyme in this species is believed to be plastoquinone. Couples the redox reaction to proton translocation, and thus conserves the redox energy in a proton gradient. Cyanobacterial NDH-1 also plays a role in inorganic carbon-concentration. The polypeptide is NAD(P)H-quinone oxidoreductase subunit 2 (Trichormus variabilis (strain ATCC 29413 / PCC 7937) (Anabaena variabilis)).